Here is a 360-residue protein sequence, read N- to C-terminus: MTQLNIAPASTDTAAASNNNAAAGTKQLARWRVADIVSLYELPFNDLMFQAQQTHREHFDANTVQLSTLLSIKTGGCEEDCAYCPQSVHHDTGLQADKLMPVDEVLAAAKVAKENGATRFCMGAAWRNPKDRHLEPIKDMIRGVKAMGLETCVTLGMLETHQAQGLREAGLDYYNHNLDTSPEFYGQIISTRTYQDRLDTLERVRDAGINVCCGGIVGLGESRRERAGLIAQLANMDPYPESVPINNLVQVEGTPLTGTEAIDPFEFVRTIAIARITMPRAMVRLSAGREQMNEALQAMCFLAGANSIFYGDQLLTTSNPQAEADRKLLERLGIRAEAAQQMPLDQSGCEHGCDKHAAPN.

Positions 1–21 are disordered; it reads MTQLNIAPASTDTAAASNNNA. One can recognise a Radical SAM core domain in the interval 62 to 289; the sequence is NTVQLSTLLS…RAMVRLSAGR (228 aa). Positions 77, 81, and 84 each coordinate [4Fe-4S] cluster. Residues C121, C152, C212, and R284 each contribute to the [2Fe-2S] cluster site.

Belongs to the radical SAM superfamily. Biotin synthase family. As to quaternary structure, homodimer. [4Fe-4S] cluster serves as cofactor. Requires [2Fe-2S] cluster as cofactor.

The enzyme catalyses (4R,5S)-dethiobiotin + (sulfur carrier)-SH + 2 reduced [2Fe-2S]-[ferredoxin] + 2 S-adenosyl-L-methionine = (sulfur carrier)-H + biotin + 2 5'-deoxyadenosine + 2 L-methionine + 2 oxidized [2Fe-2S]-[ferredoxin]. The protein operates within cofactor biosynthesis; biotin biosynthesis; biotin from 7,8-diaminononanoate: step 2/2. Its function is as follows. Catalyzes the conversion of dethiobiotin (DTB) to biotin by the insertion of a sulfur atom into dethiobiotin via a radical-based mechanism. The polypeptide is Biotin synthase (Paraburkholderia xenovorans (strain LB400)).